A 197-amino-acid chain; its full sequence is C4-dicarboxylate transport transcriptional regulatory protein DctR (197 aa).

The Response regulatory domain occupies 4-120 (TVHIVDDEES…HIVDIALSAI (117 aa)). At aspartate 53 the chain carries 4-aspartylphosphate. Residues 128–135 (AEAQAREA) form an inter-domain linker region. Positions 136-197 (VAARRASLSA…RNIADLARMT (62 aa)) constitute an HTH luxR-type domain. Residues 160–179 (NKQIAERLGIAMRTVEVHRS) constitute a DNA-binding region (H-T-H motif).

Phosphorylated by DctS.

It is found in the cytoplasm. Member of the two-component regulatory system DctS/DctR involved in the transport of C4-dicarboxylates. DctR functions as a transcriptional repressor of genes for C4-dicarboxylate transport. In Rhodobacter capsulatus (Rhodopseudomonas capsulata), this protein is C4-dicarboxylate transport transcriptional regulatory protein DctR (dctR).